Consider the following 336-residue polypeptide: Ribosomal RNA large subunit methyltransferase F (336 aa).

Belongs to the methyltransferase superfamily. METTL16/RlmF family.

It localises to the cytoplasm. It carries out the reaction adenosine(1618) in 23S rRNA + S-adenosyl-L-methionine = N(6)-methyladenosine(1618) in 23S rRNA + S-adenosyl-L-homocysteine + H(+). In terms of biological role, specifically methylates the adenine in position 1618 of 23S rRNA. This is Ribosomal RNA large subunit methyltransferase F from Yersinia pestis (strain Pestoides F).